We begin with the raw amino-acid sequence, 159 residues long: Probable histone H2A.5 (159 aa).

The span at 1-10 (MDAAGAGAGG) shows a compositional bias: gly residues. Disordered stretches follow at residues 1–29 (MDAA…KKAV) and 136–159 (EKAA…PKKA). Basic residues-rich tracts occupy residues 11–29 (KLKK…KKAV) and 148–159 (PKKAAGKSPKKA). 2 consecutive short sequence motifs (SPKK motif) follow at residues 147–150 (SPKK) and 155–158 (SPKK).

It belongs to the histone H2A family. The nucleosome is a histone octamer containing two molecules each of H2A, H2B, H3 and H4 assembled in one H3-H4 heterotetramer and two H2A-H2B heterodimers. The octamer wraps approximately 147 bp of DNA.

Its subcellular location is the nucleus. The protein localises to the chromosome. Core component of nucleosome. Nucleosomes wrap and compact DNA into chromatin, limiting DNA accessibility to the cellular machineries which require DNA as a template. Histones thereby play a central role in transcription regulation, DNA repair, DNA replication and chromosomal stability. DNA accessibility is regulated via a complex set of post-translational modifications of histones, also called histone code, and nucleosome remodeling. The sequence is that of Probable histone H2A.5 from Oryza sativa subsp. indica (Rice).